The following is a 421-amino-acid chain: Tryptophan synthase beta chain (421 aa).

Lysine 112 is subject to N6-(pyridoxal phosphate)lysine.

Belongs to the TrpB family. Tetramer of two alpha and two beta chains. Requires pyridoxal 5'-phosphate as cofactor.

The enzyme catalyses (1S,2R)-1-C-(indol-3-yl)glycerol 3-phosphate + L-serine = D-glyceraldehyde 3-phosphate + L-tryptophan + H2O. Its pathway is amino-acid biosynthesis; L-tryptophan biosynthesis; L-tryptophan from chorismate: step 5/5. Its function is as follows. The beta subunit is responsible for the synthesis of L-tryptophan from indole and L-serine. The sequence is that of Tryptophan synthase beta chain (trpB) from Mycobacterium bovis (strain ATCC BAA-935 / AF2122/97).